A 347-amino-acid polypeptide reads, in one-letter code: UDP-3-O-acylglucosamine N-acyltransferase (347 aa).

Catalysis depends on His-241, which acts as the Proton acceptor.

Belongs to the transferase hexapeptide repeat family. LpxD subfamily. In terms of assembly, homotrimer.

It catalyses the reaction a UDP-3-O-[(3R)-3-hydroxyacyl]-alpha-D-glucosamine + a (3R)-hydroxyacyl-[ACP] = a UDP-2-N,3-O-bis[(3R)-3-hydroxyacyl]-alpha-D-glucosamine + holo-[ACP] + H(+). The protein operates within bacterial outer membrane biogenesis; LPS lipid A biosynthesis. Catalyzes the N-acylation of UDP-3-O-acylglucosamine using 3-hydroxyacyl-ACP as the acyl donor. Is involved in the biosynthesis of lipid A, a phosphorylated glycolipid that anchors the lipopolysaccharide to the outer membrane of the cell. This Neisseria meningitidis serogroup A / serotype 4A (strain DSM 15465 / Z2491) protein is UDP-3-O-acylglucosamine N-acyltransferase.